The chain runs to 226 residues: Large ribosomal subunit protein uL1 (226 aa).

Belongs to the universal ribosomal protein uL1 family. In terms of assembly, part of the 50S ribosomal subunit.

Its function is as follows. Binds directly to 23S rRNA. The L1 stalk is quite mobile in the ribosome, and is involved in E site tRNA release. In terms of biological role, protein L1 is also a translational repressor protein, it controls the translation of the L11 operon by binding to its mRNA. This is Large ribosomal subunit protein uL1 from Mycoplasmoides gallisepticum (strain R(low / passage 15 / clone 2)) (Mycoplasma gallisepticum).